A 907-amino-acid chain; its full sequence is Protein translocase subunit SecA (907 aa).

ATP contacts are provided by residues Gln-87, 105–109, and Asp-510; that span reads GEGKT. 4 residues coordinate Zn(2+): Cys-892, Cys-894, Cys-903, and His-904.

This sequence belongs to the SecA family. Monomer and homodimer. Part of the essential Sec protein translocation apparatus which comprises SecA, SecYEG and auxiliary proteins SecDF-YajC and YidC. Requires Zn(2+) as cofactor.

It is found in the cell inner membrane. The protein resides in the cytoplasm. It carries out the reaction ATP + H2O + cellular proteinSide 1 = ADP + phosphate + cellular proteinSide 2.. Its function is as follows. Part of the Sec protein translocase complex. Interacts with the SecYEG preprotein conducting channel. Has a central role in coupling the hydrolysis of ATP to the transfer of proteins into and across the cell membrane, serving both as a receptor for the preprotein-SecB complex and as an ATP-driven molecular motor driving the stepwise translocation of polypeptide chains across the membrane. This Acinetobacter baumannii (strain ATCC 17978 / DSM 105126 / CIP 53.77 / LMG 1025 / NCDC KC755 / 5377) protein is Protein translocase subunit SecA.